Reading from the N-terminus, the 111-residue chain is MSNLGQQSCSACSADAPQVTDAEKQTLLKDVPEWQLIVQDGEEQLQRVFTFKNFVQAQAFTNKVADLAEEEGHHPAILLEWGKATVRWWTHKIGGLHKNDFIMAARTDELY.

This sequence belongs to the pterin-4-alpha-carbinolamine dehydratase family.

The enzyme catalyses (4aS,6R)-4a-hydroxy-L-erythro-5,6,7,8-tetrahydrobiopterin = (6R)-L-erythro-6,7-dihydrobiopterin + H2O. The sequence is that of Putative pterin-4-alpha-carbinolamine dehydratase from Marinobacter nauticus (strain ATCC 700491 / DSM 11845 / VT8) (Marinobacter aquaeolei).